Consider the following 729-residue polypeptide: Fatty acid oxidation complex subunit alpha (729 aa).

The segment at 1-189 (MLYKGDTLYL…KIGLVDGVVK (189 aa)) is enoyl-CoA hydratase/isomerase. Asp-296 lines the substrate pocket. Residues 311–729 (ETPKQAAVLG…ARPVGSLKTA (419 aa)) form a 3-hydroxyacyl-CoA dehydrogenase region. NAD(+) is bound by residues Met-324, Asp-343, 400 to 402 (VVE), Lys-407, and Ser-429. His-450 serves as the catalytic For 3-hydroxyacyl-CoA dehydrogenase activity. NAD(+) is bound at residue Asn-453. Substrate is bound by residues Asn-500 and Tyr-660. The disordered stretch occupies residues 708–729 (RHNEPYYPPVEPARPVGSLKTA).

This sequence in the N-terminal section; belongs to the enoyl-CoA hydratase/isomerase family. In the C-terminal section; belongs to the 3-hydroxyacyl-CoA dehydrogenase family. Heterotetramer of two alpha chains (FadB) and two beta chains (FadA).

The catalysed reaction is a (3S)-3-hydroxyacyl-CoA + NAD(+) = a 3-oxoacyl-CoA + NADH + H(+). The enzyme catalyses a (3S)-3-hydroxyacyl-CoA = a (2E)-enoyl-CoA + H2O. It catalyses the reaction a 4-saturated-(3S)-3-hydroxyacyl-CoA = a (3E)-enoyl-CoA + H2O. It carries out the reaction (3S)-3-hydroxybutanoyl-CoA = (3R)-3-hydroxybutanoyl-CoA. The catalysed reaction is a (3Z)-enoyl-CoA = a 4-saturated (2E)-enoyl-CoA. The enzyme catalyses a (3E)-enoyl-CoA = a 4-saturated (2E)-enoyl-CoA. It participates in lipid metabolism; fatty acid beta-oxidation. Involved in the aerobic and anaerobic degradation of long-chain fatty acids via beta-oxidation cycle. Catalyzes the formation of 3-oxoacyl-CoA from enoyl-CoA via L-3-hydroxyacyl-CoA. It can also use D-3-hydroxyacyl-CoA and cis-3-enoyl-CoA as substrate. The protein is Fatty acid oxidation complex subunit alpha of Salmonella choleraesuis (strain SC-B67).